Reading from the N-terminus, the 1047-residue chain is tRNA wybutosine-synthesizing protein 4 (1047 aa).

S-adenosyl-L-methionine contacts are provided by residues arginine 69, glycine 95, aspartate 122, 169–170 (DL), and glutamate 196. One can recognise a JmjC domain in the interval 814–1003 (GRQYLRSISA…AAGRDVYGNR (190 aa)).

This sequence belongs to the methyltransferase superfamily. LCMT family.

It catalyses the reaction 7-[(3S)-3-amino-3-carboxypropyl]wyosine(37) in tRNA(Phe) + S-adenosyl-L-methionine = 7-[(3S)-(3-amino-3-methoxycarbonyl)propyl]wyosine(37) in tRNA(Phe) + S-adenosyl-L-homocysteine. It carries out the reaction 7-[(3S)-(3-amino-3-methoxycarbonyl)propyl]wyosine(37) in tRNA(Phe) + S-adenosyl-L-methionine + CO2 = wybutosine(37) in tRNA(Phe) + S-adenosyl-L-homocysteine + 2 H(+). It participates in tRNA modification; wybutosine-tRNA(Phe) biosynthesis. Its function is as follows. Probable S-adenosyl-L-methionine-dependent methyltransferase that acts as a component of the wybutosine biosynthesis pathway. Wybutosine is a hyper modified guanosine with a tricyclic base found at the 3'-position adjacent to the anticodon of eukaryotic phenylalanine tRNA. May methylate the carboxyl group of leucine residues to form alpha-leucine ester residues. In Aspergillus fumigatus (strain ATCC MYA-4609 / CBS 101355 / FGSC A1100 / Af293) (Neosartorya fumigata), this protein is tRNA wybutosine-synthesizing protein 4 (ppm2).